Reading from the N-terminus, the 180-residue chain is Transcription factor HES-7.1-B (180 aa).

The bHLH domain maps to 13-70; it reads HRKLLKPLVEKRRRERINNSLEKLRIFLSQTLKSEKLKNPKVEKAEILECTVQFLQSR. The Orange domain occupies 84–116; sequence YQSGFQHCLETTLHFMNSKPDMNGVTKELLSHQ. The WRPW motif motif lies at 176 to 179; sequence WRPW.

Transcription repression requires formation of a complex with a corepressor protein of the Groucho/TLE family. Expressed in the presumptive midbrain-hindbrain boundary (MHB) as early as the early gastrula stage (stage 10.5). Expression in the MHB continues through to tailbud stage. Also transiently expressed in the eye anlage at late neurula stage.

The protein localises to the nucleus. In terms of biological role, transcriptional repressor. Represses transcription from both N box- and E box-containing promoters. Demarcates the prospective midbrain-hindbrain boundary (MHB) region in the neuroectoderm in early gastrulae embryos by repressing transcription of a number of target genes. The polypeptide is Transcription factor HES-7.1-B (hes7.1-b) (Xenopus laevis (African clawed frog)).